The following is a 128-amino-acid chain: Small ribosomal subunit protein bS6 (128 aa).

The protein belongs to the bacterial ribosomal protein bS6 family.

In terms of biological role, binds together with bS18 to 16S ribosomal RNA. This Thermotoga maritima (strain ATCC 43589 / DSM 3109 / JCM 10099 / NBRC 100826 / MSB8) protein is Small ribosomal subunit protein bS6 (rpsF).